The sequence spans 364 residues: Chorismate synthase (364 aa).

NADP(+) contacts are provided by R48 and R54. FMN contacts are provided by residues 129–131 (RSS), 243–244 (NA), G288, 303–307 (KPTSS), and R329.

The protein belongs to the chorismate synthase family. Homotetramer. FMNH2 serves as cofactor.

It catalyses the reaction 5-O-(1-carboxyvinyl)-3-phosphoshikimate = chorismate + phosphate. Its pathway is metabolic intermediate biosynthesis; chorismate biosynthesis; chorismate from D-erythrose 4-phosphate and phosphoenolpyruvate: step 7/7. Catalyzes the anti-1,4-elimination of the C-3 phosphate and the C-6 proR hydrogen from 5-enolpyruvylshikimate-3-phosphate (EPSP) to yield chorismate, which is the branch point compound that serves as the starting substrate for the three terminal pathways of aromatic amino acid biosynthesis. This reaction introduces a second double bond into the aromatic ring system. The sequence is that of Chorismate synthase from Chelativorans sp. (strain BNC1).